We begin with the raw amino-acid sequence, 323 residues long: Ankyrin repeat and SOCS box protein 11 (323 aa).

6 ANK repeats span residues 64–93 (ADRS…NVNL), 97–126 (NRVS…HVNG), 130–159 (HGAT…KAQL), 162–191 (HLAS…NIDQ), 195–224 (HLGT…NVNH), and 227–256 (WLDT…NLKC). Positions 273-323 (SVEQALLLREGPPALSQLCRLCVRKCLGRNCHKTIHKLYLPDPLEKFLLYQ) constitute an SOCS box domain.

Belongs to the ankyrin SOCS box (ASB) family. In terms of assembly, substrate-recognition component of the ECS(ASB11) complex, composed of ASB11, CUL5, ELOB, ELOC and RNF7/RBX2.

The protein localises to the endoplasmic reticulum. It participates in protein modification; protein ubiquitination. Its function is as follows. Substrate-recognition component of a cullin-5-RING E3 ubiquitin-protein ligase complex (ECS complex, also named CRL5 complex), which mediates the ubiquitination and subsequent proteasomal degradation of target proteins, such as BIK, DIRAS2 and RPN1. The ECS(ASB11) complex acts as a regulator of the endoplasmic reticulum unfolded protein response by mediating ubiquitination and degradation of BIK. The polypeptide is Ankyrin repeat and SOCS box protein 11 (ASB11) (Bos taurus (Bovine)).